Consider the following 148-residue polypeptide: Deoxyuridine 5'-triphosphate nucleotidohydrolase (148 aa).

Substrate contacts are provided by residues 68-70 (RSG), Asn81, 85-87 (TID), and Lys95.

The protein belongs to the dUTPase family. Requires Mg(2+) as cofactor.

The enzyme catalyses dUTP + H2O = dUMP + diphosphate + H(+). The protein operates within pyrimidine metabolism; dUMP biosynthesis; dUMP from dCTP (dUTP route): step 2/2. Functionally, this enzyme is involved in nucleotide metabolism: it produces dUMP, the immediate precursor of thymidine nucleotides and it decreases the intracellular concentration of dUTP so that uracil cannot be incorporated into DNA. This is Deoxyuridine 5'-triphosphate nucleotidohydrolase from Thermoanaerobacter sp. (strain X514).